The following is a 283-amino-acid chain: Protein canopy homolog 3 (283 aa).

The first 35 residues, 1-35, serve as a signal peptide directing secretion; that stretch reads MEPLPEPTSRPRLRPRPRCLLLLPLLLLLLLLLPA. The 222-residue stretch at 55–276 folds into the Saposin B-type domain; that stretch reads SKCEVCKYVA…EGIQKASPLT (222 aa). The N-linked (GlcNAc...) asparagine glycan is linked to Asn-161. A coiled-coil region spans residues 161-187; the sequence is NETSAEVADLKKQCDVLVEEFEEVIED. The segment at 223-283 is disordered; it reads KGDTAALGGK…PLTHSPPDEL (61 aa).

This sequence belongs to the canopy family. Interacts with HSP90B1; this interaction is disrupted in the presence of ATP. Interacts with TLR1, TLR2, TLR4 and TLR9.

Its subcellular location is the endoplasmic reticulum. Functionally, toll-like receptor (TLR)-specific co-chaperone for HSP90B1. Required for proper TLR folding, except that of TLR3, and hence controls TLR exit from the endoplasmic reticulum. Consequently, required for both innate and adaptive immune responses. In Sus scrofa (Pig), this protein is Protein canopy homolog 3 (CNPY3).